A 437-amino-acid polypeptide reads, in one-letter code: Sodium/bile acid cotransporter 4 (437 aa).

At 1–103 the chain is on the extracellular side; it reads MDGNDNVTLL…LPFWDTPLNH (103 aa). N-linked (GlcNAc...) asparagine glycosylation is found at Asn-6, Asn-18, and Asn-24. Positions 37-82 are disordered; the sequence is APASSAGPGPGLSLGPGPSFGFSPGPTPTPEPTTSGLAGGAASHGP. The span at 51 to 60 shows a compositional bias: low complexity; the sequence is GPGPSFGFSP. A helical transmembrane segment spans residues 104–124; it reads GLNVFVGAALCITMLGLGCTV. The Cytoplasmic portion of the chain corresponds to 125–140; that stretch reads DVNHFGAHVRRPVGAL. The helical transmembrane segment at 141-161 threads the bilayer; that stretch reads LAALCQFGLLPLLAFLLALAF. Residues 162–197 lie on the Extracellular side of the membrane; the sequence is KLDEVAAVAVLLCGCCPGGNLSNLMSLLVDGDMNLS. N-linked (GlcNAc...) asparagine glycans are attached at residues Asn-181 and Asn-195. The chain crosses the membrane as a helical span at residues 198–218; that stretch reads IIMTISSTLLALVLMPLCLWI. Over 219–233 the chain is Cytoplasmic; sequence YSWAWINTPIVQLLP. A helical transmembrane segment spans residues 234 to 254; it reads LGTVTLTLCSTLIPIGLGVFI. Residues 255–267 are Extracellular-facing; it reads RYKYSRVADYIVK. A helical transmembrane segment spans residues 268–288; it reads VSLWSLLVTLVVLFIMTGTML. The Cytoplasmic portion of the chain corresponds to 289–291; the sequence is GPE. The helical transmembrane segment at 292-312 threads the bilayer; sequence LLASIPAAVYVIAIFMPLAGY. The Extracellular portion of the chain corresponds to 313–360; that stretch reads ASGYGLATLFHLPPNCKRTVCLETGSQNVQLCTAILKLAFPPQFIGSM. Residues 361 to 381 form a helical membrane-spanning segment; it reads YMFPLLYALFQSAEAGIFVLI. The Cytoplasmic portion of the chain corresponds to 382–437; the sequence is YKMYGSEMLHKRDPLDEDEDTDISYKKLKEEEMADTSYGTVKAENIIMMETAQTSL.

The protein belongs to the bile acid:sodium symporter (BASS) (TC 2.A.28) family. Post-translationally, activated following N-terminal proteolytic cleavage by thrombin and/or proteases. In terms of tissue distribution, highly expressed in brain and small intestine, and moderately expressed in colon, heart, prostate, and testis. Very low levels were detected in kidney, liver, ovary, placenta, spleen, and thymus.

The protein resides in the cell membrane. Its function is as follows. Transporter for bile acids. This chain is Sodium/bile acid cotransporter 4 (SLC10A4), found in Homo sapiens (Human).